Consider the following 217-residue polypeptide: GRB2-related adapter protein (217 aa).

One can recognise an SH3 1 domain in the interval 1 to 58 (MESVALYSFQATESDELAFNKGDTLKILNMEDDQNWYKAELRGAEGFVPKNYIRVKPH). An SH2 domain is found at 60 to 152 (WYSGRISRQL…RRQIFLCDEQ (93 aa)). The 60-residue stretch at 158–217 (SRACFAQAQFDFSAQDPSQLSLRRGDIVEVVEREDPHWWRGRAGGRLGFFPRSYVQPVHL) folds into the SH3 2 domain.

This sequence belongs to the GRB2/sem-5/DRK family. In terms of assembly, associates through its SH2 domain with ligand-activated receptors for stem cell factor (KIT) and erythropoietin (EPOR). Also forms a stable complex with the Bcr-Abl oncoprotein. GRAP is associated with the Ras guanine nucleotide exchange factor SOS1, primarily through its N-terminal SH3 domain. Interacts with phosphorylated LAT upon TCR activation. Interacts with SHB. Expressed in inner ear, in neruonal fibers innervating cochlear and utricular auditory hair cells (at protein level).

The protein localises to the membrane. The protein resides in the synapse. Functionally, couples signals from receptor and cytoplasmic tyrosine kinases to the Ras signaling pathway. Plays a role in the inner ear and in hearing. This is GRB2-related adapter protein from Mus musculus (Mouse).